Here is a 74-residue protein sequence, read N- to C-terminus: Translation initiation factor IF-1 (74 aa).

The region spanning 1–72 (MSKEDAIEVE…NKGRITYRLK (72 aa)) is the S1-like domain.

Belongs to the IF-1 family. In terms of assembly, component of the 30S ribosomal translation pre-initiation complex which assembles on the 30S ribosome in the order IF-2 and IF-3, IF-1 and N-formylmethionyl-tRNA(fMet); mRNA recruitment can occur at any time during PIC assembly.

The protein resides in the cytoplasm. One of the essential components for the initiation of protein synthesis. Stabilizes the binding of IF-2 and IF-3 on the 30S subunit to which N-formylmethionyl-tRNA(fMet) subsequently binds. Helps modulate mRNA selection, yielding the 30S pre-initiation complex (PIC). Upon addition of the 50S ribosomal subunit IF-1, IF-2 and IF-3 are released leaving the mature 70S translation initiation complex. This Synechococcus sp. (strain JA-3-3Ab) (Cyanobacteria bacterium Yellowstone A-Prime) protein is Translation initiation factor IF-1.